Reading from the N-terminus, the 347-residue chain is D-alanine--D-alanine ligase (347 aa).

The region spanning 131-333 is the ATP-grasp domain; that stretch reads KRVLESAGIA…YPELIERLVD (203 aa). Position 161–216 (161–216) interacts with ATP; sequence EEKLAYPVFTKPSNMGSSVGISKSENQEELRPALELAFRYDSRVLVEQGVNAREIE. Residues Asp287, Glu300, and Asn302 each contribute to the Mg(2+) site.

The protein belongs to the D-alanine--D-alanine ligase family. Mg(2+) serves as cofactor. Mn(2+) is required as a cofactor.

Its subcellular location is the cytoplasm. It carries out the reaction 2 D-alanine + ATP = D-alanyl-D-alanine + ADP + phosphate + H(+). The protein operates within cell wall biogenesis; peptidoglycan biosynthesis. Functionally, cell wall formation. This chain is D-alanine--D-alanine ligase, found in Streptococcus pneumoniae (strain Taiwan19F-14).